We begin with the raw amino-acid sequence, 1333 residues long: MLDVNVFDELRIGLATADDIRRWSKGEVKKPETINYRTLKPEKDGLFCERIFGPTRDWECACGKYKRVRYKGIICERCGVEVTKSKVRRERMGHIELAAPVTHIWYFKGVPSRLGYLLDLAPKDLDLIIYFGANIITSVDEEARHSDQTTLEAEMLLEKKDVEADAESDIAERAEKLEEDLAELEAAGAKADARRKVQAAADKEMQHIRERAQREIDRLDEVWQTFIKLAPKQMIRDEKLYDELIDRYEDYFTGGMGAESIEALIQNFDLDAEAEELRDIINNGKGQKKMRALKRLKVVAAFQRSGNDPAGMVLNAIPVIPPELRPMVQLDGGRFATSDLNDLYRRVINRNNRLKRMIELGAPEIIVNNEKRMLQESVDALFDNGRRGRPVTGPGNRPLKSLSDLLKGKQGRFRQNLLGKRVDYSGRSVIIVGPQLRLHECGLPKLMALELFKPFVMKRLVENEYAQNIKSAKRMVERQRPEVWDVLEEAISEHPVMLNRAPTLHRLGIQAFEPVLVEGKAIQLHPLACEAFNADFDGDQMAVHLPLSAEAQAEARVLMLASNNILSPASGKPLAMPRLDMVTGLYYLTLEKSSEEFGGQGAYQPADENGPEKGVYSSLAEAIMAYDRGVLGLQAPVRIRLNHLRPPAEVEAEQFPDGWNQGETWLAHTTLGRVMFNEILPWNYPYLEGVMVRKGGGSDKIMLGDVVNDLAAKYPMITVAQTMDKMKDAGFYWSTRSGVTIAMSDVLVLPNKEEMLDRYEESARQIEVKYNRGKLTGRERYDRLVELWKDATDEVGQAVEDLYPDDNPIPMIVKSGAAGNMRQIWTLAGMKGMVVNSKGDYITRPIKTSFREGLTVLEYFNNSHGSRKGLADTALRTADSGYLTRRLVDVAQDVIVRVEDCGTRQGVRVPVAAEVLDATGAVTGYTRHDLIETSVSGRVLAGDATNAAGEVVLAAGTDLTELNIDLLVEAGIKDVKVRSVLTCQTPTGVCAKCYGKSMASGQQVDIGEAVGIVAAQSIGEPGTQLTMRTFHQGGVGGDITGGLPRVQELFEARVPKNCAPIASVEGVIHLEDEGNFYTLTIVPDDGSDNVVYEKLSKRQGLASTRVAMESNAGAFIERTLTEGDRVTVGQRLLRGAADPHDVLEILGRRGVEQHLIDEVQAVYRAQGVAIHDKHIEIIIRQMLRRGTVIESGSTEFLPGSLVDLSEAKLANSEAIGAGGQPAELRSEIMGITKASLATESWLSAASFQETTRVLTDAAINKRSDKLIGLKENVIIGKLIPAGTGISRYRNISIKPTEAARNAAYSIPTYGESIYGDDGFGEFTGASVPLDEAF.

The Zn(2+) site is built by cysteine 60, cysteine 62, cysteine 75, and cysteine 78. Mg(2+) contacts are provided by aspartate 535, aspartate 537, and aspartate 539. Positions 901, 983, 990, and 993 each coordinate Zn(2+).

Belongs to the RNA polymerase beta' chain family. As to quaternary structure, the RNAP catalytic core consists of 2 alpha, 1 beta, 1 beta' and 1 omega subunit. When a sigma factor is associated with the core the holoenzyme is formed, which can initiate transcription. Mg(2+) serves as cofactor. The cofactor is Zn(2+).

It carries out the reaction RNA(n) + a ribonucleoside 5'-triphosphate = RNA(n+1) + diphosphate. Its function is as follows. DNA-dependent RNA polymerase catalyzes the transcription of DNA into RNA using the four ribonucleoside triphosphates as substrates. This is DNA-directed RNA polymerase subunit beta' from Corynebacterium glutamicum (strain ATCC 13032 / DSM 20300 / JCM 1318 / BCRC 11384 / CCUG 27702 / LMG 3730 / NBRC 12168 / NCIMB 10025 / NRRL B-2784 / 534).